Here is a 551-residue protein sequence, read N- to C-terminus: Cleavage and polyadenylation specificity factor subunit 6 (551 aa).

The interval 1–213 is necessary for interaction with NXF1; the sequence is MADGVDHIDI…RGRFPGAVPG (213 aa). The RRM domain maps to 81–161; that stretch reads IALYIGNLTW…QSPVVTPCNK (81 aa). The segment at 81 to 161 is necessary for interaction with NUDT21/CPSF5; that stretch reads IALYIGNLTW…QSPVVTPCNK (81 aa). The interval 81–161 is necessary for nuclear paraspeckles localization; the sequence is IALYIGNLTW…QSPVVTPCNK (81 aa). T157 carries the phosphothreonine modification. Polar residues predominate over residues 169–180; sequence MQSRKTTQSGQM. Disordered regions lie at residues 169 to 411 and 477 to 551; these read MQSR…PLSE and LHGI…YRHR. Positions 184–193 are enriched in gly residues; it reads GKAGPPGGGS. A GAR motif is present at residues 202–206; it reads RGRGR. A compositionally biased stretch (low complexity) spans 207–219; sequence FPGAVPGGDRFPG. Pro residues-rich tracts occupy residues 220-265, 285-366, and 377-388; these read PAGP…PLAG, GQPP…PPPT, and GPPPTDPYGRPP. Basic and acidic residues predominate over residues 389–404; sequence PYDRGDYGPPGREMDT. Phosphothreonine is present on residues T404 and T407. Residues 404 to 551 form a sufficient for nuclear speckle localization region; the sequence is TARTPLSEAE…RDREREYRHR (148 aa). The necessary for RNA-binding stretch occupies residues 405 to 551; that stretch reads ARTPLSEAEF…RDREREYRHR (147 aa). The tract at residues 481–551 is necessary for interaction with SRSF3, SRSF7 and TRA2B/SFRS10; the sequence is ESKSYGSGSR…RDREREYRHR (71 aa). Basic and acidic residues predominate over residues 489 to 503; that stretch reads SRRERSRERDHSRSR. Residues 490-551 form an arg/Ser-rich domain region; it reads RRERSRERDH…RDREREYRHR (62 aa). Phosphoserine is present on residues S494, S500, S511, S513, and S525. Positions 504-514 are enriched in basic residues; sequence EKSRRHKSRSR. Residues 510-551 form a sufficient for nuclear targeting region; the sequence is KSRSRDRHDDYYRERSRERERHRDRDRDRDRERDREREYRHR. Over residues 515-551 the composition is skewed to basic and acidic residues; the sequence is DRHDDYYRERSRERERHRDRDRDRDRERDREREYRHR.

It belongs to the RRM CPSF6/7 family. As to quaternary structure, component of the cleavage factor Im (CFIm) complex which is a heterotetramer composed of two subunits of NUDT21/CPSF5 and two subunits of CPSF6 or CPSF7 or a heterodimer of CPSF6 and CPSF7. The cleavage factor Im (CFIm) complex associates with the CPSF and CSTF complexes to promote the assembly of the core mRNA 3'-processing machinery. Associates with the exon junction complex (EJC). Associates with the 80S ribosome particle. Interacts (via the RRM domain) with NUDT21/CPSF5; this interaction is direct and enhances binding to RNA. Interacts (via Arg/Ser-rich domain) with FIP1L1 (preferentially via unphosphorylated form and Arg/Glu/Asp-rich domain); this interaction mediates, at least in part, the interaction between the CFIm and CPSF complexes and may be inhibited by CPSF6 hyper-phosphorylation. Interacts (via N-terminus) with NXF1; this interaction is direct. Interacts with SRSF3. Interacts with SRSF7. Interacts with SNRNP70. Interacts with TRA2B/SFRS10. Interacts with UPF1. Interacts with UPF3B. Interacts with VIRMA. Interacts (via Arg/Ser-rich domain) with TNPO3; promoting nuclear import of CPSF6 independently of its phosphorylation status. Interacts with YTHDC1. In terms of processing, phosphorylated. Phosphorylated in the Arg/Ser-rich domain by SRPK1, in vitro. Post-translationally, symmetrically dimethylated on arginine residues by PRMT5 in a WDR77- and CLNS1A-dependent manner. Asymmetrically dimethylated on arginine residues by PRMT1. Symmetrically dimethylated on arginine residues in the GAR motif by PRMT5 in a WDR77- and CLNS1A-dependent manner. Asymmetrically dimethylated on arginine residues in the GAR motif by PRMT1. Expressed in testis. Expressed in male germ cells (at protein level).

The protein localises to the nucleus. Its subcellular location is the nucleoplasm. It localises to the nucleus speckle. It is found in the cytoplasm. Component of the cleavage factor Im (CFIm) complex that functions as an activator of the pre-mRNA 3'-end cleavage and polyadenylation processing required for the maturation of pre-mRNA into functional mRNAs. CFIm contributes to the recruitment of multiprotein complexes on specific sequences on the pre-mRNA 3'-end, so called cleavage and polyadenylation signals (pA signals). Most pre-mRNAs contain multiple pA signals, resulting in alternative cleavage and polyadenylation (APA) producing mRNAs with variable 3'-end formation. The CFIm complex acts as a key regulator of cleavage and polyadenylation site choice during APA through its binding to 5'-UGUA-3' elements localized in the 3'-untranslated region (UTR) for a huge number of pre-mRNAs. CPSF6 enhances NUDT21/CPSF5 binding to 5'-UGUA-3' elements localized upstream of pA signals and promotes RNA looping, and hence activates directly the mRNA 3'-processing machinery. Plays a role in mRNA export. The polypeptide is Cleavage and polyadenylation specificity factor subunit 6 (Mus musculus (Mouse)).